The following is a 612-amino-acid chain: Dihydroxy-acid dehydratase (612 aa).

Residue aspartate 81 coordinates Mg(2+). Cysteine 122 is a binding site for [2Fe-2S] cluster. Residues aspartate 123 and lysine 124 each coordinate Mg(2+). Lysine 124 bears the N6-carboxylysine mark. Residue cysteine 195 participates in [2Fe-2S] cluster binding. Glutamate 491 serves as a coordination point for Mg(2+). Serine 517 (proton acceptor) is an active-site residue.

Belongs to the IlvD/Edd family. Homodimer. The cofactor is [2Fe-2S] cluster. It depends on Mg(2+) as a cofactor.

The catalysed reaction is (2R)-2,3-dihydroxy-3-methylbutanoate = 3-methyl-2-oxobutanoate + H2O. It catalyses the reaction (2R,3R)-2,3-dihydroxy-3-methylpentanoate = (S)-3-methyl-2-oxopentanoate + H2O. It functions in the pathway amino-acid biosynthesis; L-isoleucine biosynthesis; L-isoleucine from 2-oxobutanoate: step 3/4. It participates in amino-acid biosynthesis; L-valine biosynthesis; L-valine from pyruvate: step 3/4. Its function is as follows. Functions in the biosynthesis of branched-chain amino acids. Catalyzes the dehydration of (2R,3R)-2,3-dihydroxy-3-methylpentanoate (2,3-dihydroxy-3-methylvalerate) into 2-oxo-3-methylpentanoate (2-oxo-3-methylvalerate) and of (2R)-2,3-dihydroxy-3-methylbutanoate (2,3-dihydroxyisovalerate) into 2-oxo-3-methylbutanoate (2-oxoisovalerate), the penultimate precursor to L-isoleucine and L-valine, respectively. The polypeptide is Dihydroxy-acid dehydratase (Psychromonas ingrahamii (strain DSM 17664 / CCUG 51855 / 37)).